The chain runs to 384 residues: Dual-specificity RNA methyltransferase RlmN (384 aa).

Glutamate 105 acts as the Proton acceptor in catalysis. Positions 111 to 350 (EDDRATLCVS…TIVRKTRGDD (240 aa)) constitute a Radical SAM core domain. Cysteines 118 and 355 form a disulfide. [4Fe-4S] cluster contacts are provided by cysteine 125, cysteine 129, and cysteine 132. S-adenosyl-L-methionine contacts are provided by residues 179–180 (GE), serine 211, 233–235 (SLH), and asparagine 312. The active-site S-methylcysteine intermediate is cysteine 355.

The protein belongs to the radical SAM superfamily. RlmN family. Requires [4Fe-4S] cluster as cofactor.

It localises to the cytoplasm. It carries out the reaction adenosine(2503) in 23S rRNA + 2 reduced [2Fe-2S]-[ferredoxin] + 2 S-adenosyl-L-methionine = 2-methyladenosine(2503) in 23S rRNA + 5'-deoxyadenosine + L-methionine + 2 oxidized [2Fe-2S]-[ferredoxin] + S-adenosyl-L-homocysteine. The enzyme catalyses adenosine(37) in tRNA + 2 reduced [2Fe-2S]-[ferredoxin] + 2 S-adenosyl-L-methionine = 2-methyladenosine(37) in tRNA + 5'-deoxyadenosine + L-methionine + 2 oxidized [2Fe-2S]-[ferredoxin] + S-adenosyl-L-homocysteine. Its function is as follows. Specifically methylates position 2 of adenine 2503 in 23S rRNA and position 2 of adenine 37 in tRNAs. m2A2503 modification seems to play a crucial role in the proofreading step occurring at the peptidyl transferase center and thus would serve to optimize ribosomal fidelity. In Shigella flexneri serotype 5b (strain 8401), this protein is Dual-specificity RNA methyltransferase RlmN.